The chain runs to 285 residues: Acetylglutamate kinase (285 aa).

Substrate is bound by residues 64–65 (GG), Arg86, and Asn180.

The protein belongs to the acetylglutamate kinase family. ArgB subfamily.

The protein resides in the plastid. It is found in the chloroplast. It carries out the reaction N-acetyl-L-glutamate + ATP = N-acetyl-L-glutamyl 5-phosphate + ADP. It functions in the pathway amino-acid biosynthesis; L-arginine biosynthesis; N(2)-acetyl-L-ornithine from L-glutamate: step 2/4. Functionally, catalyzes the ATP-dependent phosphorylation of N-acetyl-L-glutamate. The sequence is that of Acetylglutamate kinase from Gracilaria tenuistipitata var. liui (Red alga).